The chain runs to 366 residues: Aminomethyltransferase (366 aa).

Belongs to the GcvT family. As to quaternary structure, the glycine cleavage system is composed of four proteins: P, T, L and H.

It carries out the reaction N(6)-[(R)-S(8)-aminomethyldihydrolipoyl]-L-lysyl-[protein] + (6S)-5,6,7,8-tetrahydrofolate = N(6)-[(R)-dihydrolipoyl]-L-lysyl-[protein] + (6R)-5,10-methylene-5,6,7,8-tetrahydrofolate + NH4(+). The glycine cleavage system catalyzes the degradation of glycine. In Bacillus mycoides (strain KBAB4) (Bacillus weihenstephanensis), this protein is Aminomethyltransferase.